The chain runs to 158 residues: SsrA-binding protein (158 aa).

Belongs to the SmpB family.

The protein localises to the cytoplasm. Its function is as follows. Required for rescue of stalled ribosomes mediated by trans-translation. Binds to transfer-messenger RNA (tmRNA), required for stable association of tmRNA with ribosomes. tmRNA and SmpB together mimic tRNA shape, replacing the anticodon stem-loop with SmpB. tmRNA is encoded by the ssrA gene; the 2 termini fold to resemble tRNA(Ala) and it encodes a 'tag peptide', a short internal open reading frame. During trans-translation Ala-aminoacylated tmRNA acts like a tRNA, entering the A-site of stalled ribosomes, displacing the stalled mRNA. The ribosome then switches to translate the ORF on the tmRNA; the nascent peptide is terminated with the 'tag peptide' encoded by the tmRNA and targeted for degradation. The ribosome is freed to recommence translation, which seems to be the essential function of trans-translation. The polypeptide is SsrA-binding protein (Pseudoalteromonas atlantica (strain T6c / ATCC BAA-1087)).